Here is a 208-residue protein sequence, read N- to C-terminus: Adapter protein MecA (208 aa).

It belongs to the MecA family. As to quaternary structure, homodimer.

Functionally, enables the recognition and targeting of unfolded and aggregated proteins to the ClpC protease or to other proteins involved in proteolysis. This Exiguobacterium sibiricum (strain DSM 17290 / CCUG 55495 / CIP 109462 / JCM 13490 / 255-15) protein is Adapter protein MecA.